The following is a 242-amino-acid chain: Ribonuclease 3 (242 aa).

Residues 7–136 (LEALQNLLGY…LLASIYLDGG (130 aa)) form the RNase III domain. Glu49 is a binding site for Mg(2+). Asp53 is an active-site residue. The Mg(2+) site is built by Asp122 and Glu125. Glu125 is an active-site residue. The region spanning 167 to 236 (DYKTQLQELT…AEKALQIIAA (70 aa)) is the DRBM domain.

This sequence belongs to the ribonuclease III family. As to quaternary structure, homodimer. Requires Mg(2+) as cofactor.

Its subcellular location is the cytoplasm. The enzyme catalyses Endonucleolytic cleavage to 5'-phosphomonoester.. In terms of biological role, digests double-stranded RNA. Involved in the processing of primary rRNA transcript to yield the immediate precursors to the large and small rRNAs (23S and 16S). Processes some mRNAs, and tRNAs when they are encoded in the rRNA operon. Processes pre-crRNA and tracrRNA of type II CRISPR loci if present in the organism. The chain is Ribonuclease 3 from Syntrophobacter fumaroxidans (strain DSM 10017 / MPOB).